Reading from the N-terminus, the 155-residue chain is uncharacterized protein (155 aa).

The segment at 135 to 155 is disordered; it reads SQANSKNDSNSKDDLPNPFSV.

This is an uncharacterized protein from Acidianus convivator (ATV).